The primary structure comprises 274 residues: MIEIKKAKPTSPGRRHVVSVKNTELHTGKPFKGLVEVKKSKAGRNNTGRITVRHQGGGHKQHYRIVDFKRNKDDITAKVERIEYDPNRSANIALVLYADGERRYIVAPKGLKKDMSVISGEKVDVAVGNCMPLRNIPLGTVIHNIEMKPKKGAQMIRSAGTFAQLVGKDNAYAIIRLRSGEMRRVLLDCRAVIGVVSNSEHNLKSLGKAGAKRWRGIRPTVRGVAMNPVDHPHGGGEGRTSGGRHPVTPWGIPTKGYKTRRNKRSNKLIVQKRK.

Residues 224-274 are disordered; the sequence is VAMNPVDHPHGGGEGRTSGGRHPVTPWGIPTKGYKTRRNKRSNKLIVQKRK. Over residues 257–274 the composition is skewed to basic residues; it reads YKTRRNKRSNKLIVQKRK.

The protein belongs to the universal ribosomal protein uL2 family. In terms of assembly, part of the 50S ribosomal subunit. Forms a bridge to the 30S subunit in the 70S ribosome.

In terms of biological role, one of the primary rRNA binding proteins. Required for association of the 30S and 50S subunits to form the 70S ribosome, for tRNA binding and peptide bond formation. It has been suggested to have peptidyltransferase activity; this is somewhat controversial. Makes several contacts with the 16S rRNA in the 70S ribosome. In Francisella tularensis subsp. tularensis (strain FSC 198), this protein is Large ribosomal subunit protein uL2.